The chain runs to 307 residues: Ornithine carbamoyltransferase (307 aa).

Carbamoyl phosphate-binding positions include 53–56, Q80, R104, and 131–134; these read STRT and HPCQ. Residues N162, D220, and 224–225 contribute to the L-ornithine site; that span reads SM. Residues 260–261 and R288 each bind carbamoyl phosphate; that span reads CL.

This sequence belongs to the aspartate/ornithine carbamoyltransferase superfamily. OTCase family.

It is found in the cytoplasm. It catalyses the reaction carbamoyl phosphate + L-ornithine = L-citrulline + phosphate + H(+). It participates in amino-acid biosynthesis; L-arginine biosynthesis; L-arginine from L-ornithine and carbamoyl phosphate: step 1/3. Reversibly catalyzes the transfer of the carbamoyl group from carbamoyl phosphate (CP) to the N(epsilon) atom of ornithine (ORN) to produce L-citrulline. This is Ornithine carbamoyltransferase from Nitrosomonas europaea (strain ATCC 19718 / CIP 103999 / KCTC 2705 / NBRC 14298).